The primary structure comprises 79 residues: MEKMVKFELKYDELLEKIPYKYAIPVVVAKRAEAIREYARPFVITEDENPVSIAFMELSMNYIRIKNEDILKALIPKVK.

The protein belongs to the RNA polymerase subunit omega family. As to quaternary structure, the RNAP catalytic core consists of 2 alpha, 1 beta, 1 beta' and 1 omega subunit. When a sigma factor is associated with the core the holoenzyme is formed, which can initiate transcription.

It carries out the reaction RNA(n) + a ribonucleoside 5'-triphosphate = RNA(n+1) + diphosphate. Its function is as follows. Promotes RNA polymerase assembly. Latches the N- and C-terminal regions of the beta' subunit thereby facilitating its interaction with the beta and alpha subunits. The sequence is that of DNA-directed RNA polymerase subunit omega from Thermotoga neapolitana (strain ATCC 49049 / DSM 4359 / NBRC 107923 / NS-E).